The following is an 89-amino-acid chain: Small ribosomal subunit protein uS15 (89 aa).

Belongs to the universal ribosomal protein uS15 family. As to quaternary structure, part of the 30S ribosomal subunit. Forms a bridge to the 50S subunit in the 70S ribosome, contacting the 23S rRNA.

One of the primary rRNA binding proteins, it binds directly to 16S rRNA where it helps nucleate assembly of the platform of the 30S subunit by binding and bridging several RNA helices of the 16S rRNA. Functionally, forms an intersubunit bridge (bridge B4) with the 23S rRNA of the 50S subunit in the ribosome. The chain is Small ribosomal subunit protein uS15 from Mycolicibacterium vanbaalenii (strain DSM 7251 / JCM 13017 / BCRC 16820 / KCTC 9966 / NRRL B-24157 / PYR-1) (Mycobacterium vanbaalenii).